The sequence spans 367 residues: Probable butyrate kinase (367 aa).

The protein belongs to the acetokinase family.

Its subcellular location is the cytoplasm. It carries out the reaction butanoate + ATP = butanoyl phosphate + ADP. The protein is Probable butyrate kinase of Bacillus cereus (strain Q1).